Here is a 431-residue protein sequence, read N- to C-terminus: Enolase (431 aa).

Gln166 lines the (2R)-2-phosphoglycerate pocket. Residue Glu208 is the Proton donor of the active site. 3 residues coordinate Mg(2+): Asp245, Glu288, and Asp315. The (2R)-2-phosphoglycerate site is built by Lys340, Arg369, Ser370, and Lys391. The active-site Proton acceptor is Lys340.

Belongs to the enolase family. Requires Mg(2+) as cofactor.

The protein localises to the cytoplasm. It localises to the secreted. The protein resides in the cell surface. The catalysed reaction is (2R)-2-phosphoglycerate = phosphoenolpyruvate + H2O. It participates in carbohydrate degradation; glycolysis; pyruvate from D-glyceraldehyde 3-phosphate: step 4/5. In terms of biological role, catalyzes the reversible conversion of 2-phosphoglycerate (2-PG) into phosphoenolpyruvate (PEP). It is essential for the degradation of carbohydrates via glycolysis. The protein is Enolase of Clostridium acetobutylicum (strain ATCC 824 / DSM 792 / JCM 1419 / IAM 19013 / LMG 5710 / NBRC 13948 / NRRL B-527 / VKM B-1787 / 2291 / W).